The sequence spans 1642 residues: Cholesterol transporter ABCA5 (1642 aa).

Residues 32-52 (SVQEILFPLFFLFWLILVSMM) traverse the membrane as a helical segment. Asparagine 86 carries N-linked (GlcNAc...) asparagine glycosylation. Transmembrane regions (helical) follow at residues 220-240 (VILI…AIHI), 264-284 (LSWV…MAVI), 297-317 (IVIF…ALML), 328-348 (GVVE…IVLI), and 355-375 (LVWL…AQVM). Asparagine 388 carries N-linked (GlcNAc...) asparagine glycosylation. A helical transmembrane segment spans residues 396 to 416 (LIITIIMLALDSVFYVLLAVY). N-linked (GlcNAc...) asparagine glycosylation occurs at asparagine 458. An ABC transporter 1 domain is found at 478 to 713 (IRISGIQKSY…WGIGYRLSMY (236 aa)). 514–521 (GHSGTGKS) lines the ATP pocket. A helical transmembrane segment spans residues 864–884 (AVLLLLLIFFAVQIFMFFLHH). Asparagine 919 carries an N-linked (GlcNAc...) asparagine glycan. The helical transmembrane segment at 967 to 987 (VFSAVFNSTMVYCLPVMMNII) threads the bilayer. An N-linked (GlcNAc...) asparagine glycan is attached at asparagine 996. The next 6 helical transmembrane spans lie at 1021 to 1041 (LYFQ…YFAM), 1071 to 1091 (VVDI…LFAF), 1102 to 1122 (FLAV…FTYI), 1138 to 1158 (SFIY…TFFL), 1164 to 1184 (AVFH…GCLI), and 1207 to 1227 (LLVA…LLQH). One can recognise an ABC transporter 2 domain in the interval 1290–1533 (IMVCNLHKEY…FGKGYFLEIK (244 aa)). Residue 1333–1340 (GPNGAGKS) participates in ATP binding.

Belongs to the ABC transporter superfamily. ABCA family. In terms of processing, N-glycosylated. Expressed in cardiomyocytes, oligodendrocytes and astrocytes in brain, alveolar type 2 cells in lung and follicular cells in the thyroid gland (at protein level). Detected in brain, testis, lung, heart, liver, kidney, skeletal muscle and placenta. Strongly expressed in the basal cells of the seminiferous tubules, interstitial cells consisting of Leydig cells, as well as the tunica albuginea. In the epididymis, specifically and very strongly expressed in the connective tissue outlining the cylindrical epithelium in the corpus and cauda regions, including fibrocytes and smooth muscle cells, as well as within the basal and tall columnar cells of the corpus cylindrical epithelium. Highly expressed in the brain with high expression in cortical and hippocampal neurons and moderately in the lung.

The protein resides in the golgi apparatus membrane. It is found in the lysosome membrane. Its subcellular location is the late endosome membrane. The protein localises to the cell membrane. It catalyses the reaction cholesterol(in) + ATP + H2O = cholesterol(out) + ADP + phosphate + H(+). Functionally, cholesterol efflux transporter in macrophages that is responsible for APOAI/high-density lipoproteins (HDL) formation at the plasma membrane under high cholesterol levels and participates in reverse cholesterol transport. May play a role in the processing of autolysosomes. The chain is Cholesterol transporter ABCA5 from Mus musculus (Mouse).